The chain runs to 817 residues: Alpha-bisabolene synthase (817 aa).

Mg(2+) is bound by residues Asp-566, Asp-570, Asp-713, Thr-717, and Glu-721. A DDXXD motif motif is present at residues 566-570 (DDMYD).

It belongs to the terpene synthase family. Tpsd subfamily. The cofactor is Mg(2+). Mn(2+) is required as a cofactor. Requires K(+) as cofactor.

It localises to the cytoplasm. It catalyses the reaction (2E,6E)-farnesyl diphosphate = (E,R)-alpha-bisabolene + diphosphate. Its pathway is terpene metabolism; oleoresin biosynthesis. In terms of biological role, converts farnesyl diphosphate to alpha-bisabolene. Involved in defensive oleoresin formation in conifers in response to insect attack or other injury. Involved in sesquiterpene (C15) olefins biosynthesis. The chain is Alpha-bisabolene synthase (ag1) from Abies grandis (Grand fir).